The sequence spans 352 residues: UDP-3-O-acylglucosamine N-acyltransferase (352 aa).

The Proton acceptor role is filled by His244.

Belongs to the transferase hexapeptide repeat family. LpxD subfamily. As to quaternary structure, homotrimer.

It catalyses the reaction a UDP-3-O-[(3R)-3-hydroxyacyl]-alpha-D-glucosamine + a (3R)-hydroxyacyl-[ACP] = a UDP-2-N,3-O-bis[(3R)-3-hydroxyacyl]-alpha-D-glucosamine + holo-[ACP] + H(+). It participates in bacterial outer membrane biogenesis; LPS lipid A biosynthesis. In terms of biological role, catalyzes the N-acylation of UDP-3-O-acylglucosamine using 3-hydroxyacyl-ACP as the acyl donor. Is involved in the biosynthesis of lipid A, a phosphorylated glycolipid that anchors the lipopolysaccharide to the outer membrane of the cell. This chain is UDP-3-O-acylglucosamine N-acyltransferase, found in Anaeromyxobacter sp. (strain Fw109-5).